A 207-amino-acid chain; its full sequence is Large ribosomal subunit protein uL4 (207 aa).

The segment at 56–77 is disordered; sequence FVSGGGKKPWRQKGTGRARHGS. Over residues 63 to 77 the composition is skewed to basic residues; sequence KPWRQKGTGRARHGS.

Belongs to the universal ribosomal protein uL4 family. As to quaternary structure, part of the 50S ribosomal subunit.

One of the primary rRNA binding proteins, this protein initially binds near the 5'-end of the 23S rRNA. It is important during the early stages of 50S assembly. It makes multiple contacts with different domains of the 23S rRNA in the assembled 50S subunit and ribosome. In terms of biological role, forms part of the polypeptide exit tunnel. The protein is Large ribosomal subunit protein uL4 of Phytoplasma australiense.